The following is a 342-amino-acid chain: Phosphate acyltransferase (342 aa).

Belongs to the PlsX family. Homodimer. Probably interacts with PlsY.

The protein resides in the cytoplasm. It carries out the reaction a fatty acyl-[ACP] + phosphate = an acyl phosphate + holo-[ACP]. It functions in the pathway lipid metabolism; phospholipid metabolism. Its function is as follows. Catalyzes the reversible formation of acyl-phosphate (acyl-PO(4)) from acyl-[acyl-carrier-protein] (acyl-ACP). This enzyme utilizes acyl-ACP as fatty acyl donor, but not acyl-CoA. In Shewanella sp. (strain MR-4), this protein is Phosphate acyltransferase.